Consider the following 632-residue polypeptide: POU domain, class 2, transcription factor 1 (632 aa).

Residues threonine 157 and threonine 163 each carry the phosphothreonine modification. The 75-residue stretch at 167 to 241 (EEPSDLEELE…LLEKWLNDAE (75 aa)) folds into the POU-specific domain. Residue serine 170 is modified to Phosphoserine. Residues 243 to 258 (LSSDSTASSPSALNSP) show a composition bias toward low complexity. The segment at 243 to 273 (LSSDSTASSPSALNSPGLGAEGLNRRRKKRT) is disordered. Positions 268 to 327 (RRKKRTSIETNIRVALEKSFMENQKPTSEDITLIAEQLNMEKEVIRVWFCNRRQKEKRIN) form a DNA-binding region, homeobox. Residues serine 274 and serine 337 each carry the phosphoserine modification. The disordered stretch occupies residues 385–448 (GTTDSTSNNT…STPLPSPLGA (64 aa)). Over residues 394–441 (TATVISTAPPASSAVTSPSLSPSPSASASTSEASSASETSTTQTTSTP) the composition is skewed to low complexity.

Belongs to the POU transcription factor family. Class-2 subfamily. Interacts with POU2AF1; the interaction increases POU2F1 transactivation activity. Interacts with NR3C1, AR, PGR and HCFC1. Phosphorylated by PRKDC. As to expression, widely expressed.

The protein localises to the nucleus. Functionally, transcription factor that binds to the octamer motif (5'-ATTTGCAT-3') and activates the promoters of the genes for some small nuclear RNAs (snRNA) and of genes such as those for histone H2B and immunoglobulins. Modulates transcription transactivation by NR3C1, AR and PGR. This chain is POU domain, class 2, transcription factor 1 (Pou2f1), found in Rattus norvegicus (Rat).